Consider the following 84-residue polypeptide: Neurotoxin BM10-1-like (84 aa).

The first 21 residues, 1–21, serve as a signal peptide directing secretion; the sequence is MKTLLLTLVVVTIVCLDLGYT. Cystine bridges form between Cys24-Cys47, Cys27-Cys32, Cys40-Cys64, Cys68-Cys76, and Cys77-Cys82.

The protein belongs to the three-finger toxin family. Ancestral subfamily. Orphan group IV sub-subfamily. In terms of tissue distribution, expressed by the venom gland.

It localises to the secreted. In terms of biological role, binds and inhibits muscular and neuronal nicotinic acetylcholine receptors (nAChR). The polypeptide is Neurotoxin BM10-1-like (Bungarus multicinctus (Many-banded krait)).